A 257-amino-acid polypeptide reads, in one-letter code: UPF0246 protein Lcho_2652 (257 aa).

It belongs to the UPF0246 family.

In Leptothrix cholodnii (strain ATCC 51168 / LMG 8142 / SP-6) (Leptothrix discophora (strain SP-6)), this protein is UPF0246 protein Lcho_2652.